We begin with the raw amino-acid sequence, 268 residues long: MTNMIDPHLLLSAYATGIFPMSDSRETDEVYWVEPKKRGILPPDHFHLSRSLAKIIRSDRFLVTADRDFEAVIDLCAEPTEDRPDSWINPPIRAAYCQLHNLGYAHSIECWLDNRLVGGLYGVNLGYAFFGESMFSRVSNASKVALAWLVARLKVGNFSLLDCQFITDHLASMGAIEITREDYLKRLKSAVSSYFTDKETGNWNTLDRLSPLLHNKHSKTKENQFADADLPFTEGIALETDGTAPGEASFSLACPNGARIVQLLGQIS.

It belongs to the L/F-transferase family.

It localises to the cytoplasm. The enzyme catalyses N-terminal L-lysyl-[protein] + L-leucyl-tRNA(Leu) = N-terminal L-leucyl-L-lysyl-[protein] + tRNA(Leu) + H(+). The catalysed reaction is N-terminal L-arginyl-[protein] + L-leucyl-tRNA(Leu) = N-terminal L-leucyl-L-arginyl-[protein] + tRNA(Leu) + H(+). It carries out the reaction L-phenylalanyl-tRNA(Phe) + an N-terminal L-alpha-aminoacyl-[protein] = an N-terminal L-phenylalanyl-L-alpha-aminoacyl-[protein] + tRNA(Phe). In terms of biological role, functions in the N-end rule pathway of protein degradation where it conjugates Leu, Phe and, less efficiently, Met from aminoacyl-tRNAs to the N-termini of proteins containing an N-terminal arginine or lysine. This Zymomonas mobilis subsp. mobilis (strain ATCC 31821 / ZM4 / CP4) protein is Leucyl/phenylalanyl-tRNA--protein transferase.